The primary structure comprises 515 residues: Anthranilate synthase component 1 (515 aa).

Residues Thr-40 and 291–293 (PYM) each bind L-tryptophan. 328–329 (GT) is a binding site for chorismate. Glu-361 serves as a coordination point for Mg(2+). Chorismate-binding positions include Tyr-449, Arg-469, 483–485 (GAG), and Gly-485. Glu-498 provides a ligand contact to Mg(2+).

Belongs to the anthranilate synthase component I family. As to quaternary structure, heterotetramer consisting of two non-identical subunits: a beta subunit (TrpG) and a large alpha subunit (TrpE). Mg(2+) is required as a cofactor.

It carries out the reaction chorismate + L-glutamine = anthranilate + pyruvate + L-glutamate + H(+). It participates in amino-acid biosynthesis; L-tryptophan biosynthesis; L-tryptophan from chorismate: step 1/5. Its activity is regulated as follows. Feedback inhibited by tryptophan. Part of a heterotetrameric complex that catalyzes the two-step biosynthesis of anthranilate, an intermediate in the biosynthesis of L-tryptophan. In the first step, the glutamine-binding beta subunit (TrpG) of anthranilate synthase (AS) provides the glutamine amidotransferase activity which generates ammonia as a substrate that, along with chorismate, is used in the second step, catalyzed by the large alpha subunit of AS (TrpE) to produce anthranilate. In the absence of TrpG, TrpE can synthesize anthranilate directly from chorismate and high concentrations of ammonia. The polypeptide is Anthranilate synthase component 1 (trpE) (Buchnera aphidicola subsp. Schizaphis graminum (strain Sg)).